Reading from the N-terminus, the 382-residue chain is Putative oxidoreductase C1F5.03c (382 aa).

Residues 7–27 (IVIVGGGITGVSCLYFLAHHP) form a helical membrane-spanning segment.

It belongs to the TDA3 family.

It is found in the cytoplasm. It localises to the membrane. Putative oxidoreductase that negatively regulates the retrieval of cargo from late endosomes to the Golgi. This chain is Putative oxidoreductase C1F5.03c, found in Schizosaccharomyces pombe (strain 972 / ATCC 24843) (Fission yeast).